Reading from the N-terminus, the 105-residue chain is Heme oxygenase (mycobilin-producing) (105 aa).

In terms of domain architecture, ABM spans 3–92 (VVKINAIEVP…VATGASLLEF (90 aa)). Heme-binding positions include 22–26 (RFAHR), H75, and 83–86 (VATG).

The protein belongs to the antibiotic biosynthesis monooxygenase family. As to quaternary structure, homodimer.

It catalyses the reaction heme b + 3 AH2 + 3 O2 + 2 H(+) = mycobilin a + Fe(2+) + 3 A + 3 H2O. It carries out the reaction heme b + 3 AH2 + 3 O2 + 2 H(+) = mycobilin b + Fe(2+) + 3 A + 3 H2O. Catalyzes the oxidative degradation of the heme macrocyclic porphyrin ring in the presence of a suitable electron donor such as ascorbate or NADPH--cytochrome P450 reductase, with subsequent release of free iron. This Mycobacterium tuberculosis (strain CDC 1551 / Oshkosh) protein is Heme oxygenase (mycobilin-producing) (mhuD).